Consider the following 1220-residue polypeptide: MAIDVNKFESMQIGLASPDKIRSWSYGEVKKPETINYRTLKPEKDGLFDERIFGPTKDYECACGKYKRIRYKGIVCDRCGVEVTSSKVRRERMGHIELAAPVTHIWYFKGIPSRMGLVLDMSPRSLEEIIYFASYVVIEPGDAPVEKKQLMTEREYRELKREYGASFKAGMGAEAIKDLLASVDLAAEADQLKRELQEATGQKRVRAVRRLDIIEAFLQSDNKPQWMVMDVIPVIPPDLRPMVQLEGGRFATSDLNDLYRRVINRNNRLKRLLDLNAPGIIVQNEKRMLQEAVDALIDNGRRGRPVAGPGNRPLKSLSHMLKGKQGRFRQNLLGKRVDYSGRSVIDVGPFLKMNQMGLPRPMAIELFRPFIMKELTTRKLAGNVKSAKRKIDKADEDVMDVLEDVIKEHPVLLNRAPTLHRLGIQAFEPVLVSGKAMRLHPLVTEAYNADFDGDQMAIHVPLSDEAQAEARLLMLAAGHILAPKDGKPIVAPSQDMVIGNYYLTTEEAGREGEGMIFSSVEEAKIAFASKVVHYHTRIGIQTSSFPEAKPFTDEQRSKIMVTSVGKLIFNEILPVDFPYINEPSEDNFKGISDQFFIEPGEDIHDYLADTAVIGAFKKGFLSDVIAEVYKRYKVTETSLLLDRMKDLGYEKSTESGLTVSMNDVTELTEKPAILEDAHKQVATVTKQFRRGLITDSERYQRVTEIWTKAKDVIQDKLIASFEPTNPIFMMQDSGARGNISNFVQLAGMRGLMAGPGGKIIELPVTANFREGLTVMEMFISTHGARKGMSDTALKTANSGYLTRRLVDVAQDVIVREWNNNADRGVAVKAIMDGTSVVEPLYDRILGRYAMKSVFNPETGDKLVSRNEMIDEDVAKAIVAAGIEEVTIRSVFTSTTEHGVSVLDYGRNLATGEEVEVGEAVGTVAAQSIGEPGTQLTMRNFHTGGVAGGNDITQGLPRVQEIVEARIPKGRAEISEVTGTVVAIEENPAERTKAVTIEGETDTRTYTLPLAARMRFAEGDDIQRGDAINEGPIDPKELLAVTDTLTTESYMLTEIQKVYRLQGIEVSDKHIEVMIRQMLRKVRVMDPGETSLLPGMLMDIADFQRANEPALFDGLVPATARPVLLGITKAALETNSFLSAASFQETTRVLTDAAIRGKNDPLVGLKENVIIGKIIPAGTGMAEYRKIKSKVVGEVVAQPEVEQEPTPDIPKLDDVAKSFEE.

Positions 61, 63, 76, and 79 each coordinate Zn(2+). The Mg(2+) site is built by Asp-450, Asp-452, and Asp-454. The interval 1197–1220 (QPEVEQEPTPDIPKLDDVAKSFEE) is disordered. Basic and acidic residues predominate over residues 1209 to 1220 (PKLDDVAKSFEE).

Belongs to the RNA polymerase beta' chain family. In terms of assembly, the RNAP catalytic core consists of 2 alpha, 1 beta, 1 beta' and 1 omega subunit. When a sigma factor is associated with the core the holoenzyme is formed, which can initiate transcription. Mg(2+) is required as a cofactor. The cofactor is Zn(2+).

It catalyses the reaction RNA(n) + a ribonucleoside 5'-triphosphate = RNA(n+1) + diphosphate. Its function is as follows. DNA-dependent RNA polymerase catalyzes the transcription of DNA into RNA using the four ribonucleoside triphosphates as substrates. The protein is DNA-directed RNA polymerase subunit beta' of Leuconostoc citreum (strain KM20).